The following is a 145-amino-acid chain: uncharacterized protein (145 aa).

Residues 4 to 24 traverse the membrane as a helical segment; the sequence is IYMLVALLISSLVLFAGCVQN.

The protein resides in the membrane. This is an uncharacterized protein from Methanocaldococcus jannaschii (strain ATCC 43067 / DSM 2661 / JAL-1 / JCM 10045 / NBRC 100440) (Methanococcus jannaschii).